Reading from the N-terminus, the 122-residue chain is Large ribosomal subunit protein uL14 (122 aa).

Belongs to the universal ribosomal protein uL14 family. As to quaternary structure, part of the 50S ribosomal subunit. Forms a cluster with proteins L3 and L19. In the 70S ribosome, L14 and L19 interact and together make contacts with the 16S rRNA in bridges B5 and B8.

Binds to 23S rRNA. Forms part of two intersubunit bridges in the 70S ribosome. This chain is Large ribosomal subunit protein uL14, found in Mycoplasmopsis agalactiae (strain NCTC 10123 / CIP 59.7 / PG2) (Mycoplasma agalactiae).